The following is a 598-amino-acid chain: MTDLTTSDSLQPAWQTRDHLDDPVIGELSNRFGPEAFVVQATRTGMPVVWVKREQLLEVMSFLRKQPKPYVMLFDLHGVDERLRTHRQGLPDADFSVFYHLLSIERNRDIMLKVALSEKDLHVSTATKIFPNANWYERETWEMFGITFDGHPHLTRIMMPQSWEGHPLRKDYPARATEFDPYVLTKQKEDLEMESLTFKPEDWGMKRGTENEDFMFLNLGPNHPSSHGAFRIVLQLDGEEIIDCVPDVGYHHRGAEKMGERQSWHSYIPYTDRIEYLGGCVNEMPYVLAVEKLAGIVVPDRVNTIRVMLSELFRINSHLLYISTFIQDVGAMTPVFFAFTDRQKVYDVIEAITGFRMHPAWFRIGGVAHDLPRGWERLLRDFLDWMPKRLDSYVKAALQNSILKGRSVGVAAYNAKEALEWGVTGAGLRATGVEFDVRKWRPYSGYENFDFEVPVGNNGDCYDRVMLKVEELRQSLRILEQCYKNMPEGPFKADHPLTTPPPKERTLQHIETLITHFLQVSWGPVMPANESFQMIEATKGINSYYLTSDGSTMSYRTRIRTPSYAHLQQIPSVIRGSLVSDLIVYLGSIDFVMSDVDR.

Residues 1–189 (MTDLTTSDSL…DPYVLTKQKE (189 aa)) form an NADH dehydrogenase I subunit C region. The segment at 213-598 (DFMFLNLGPN…IDFVMSDVDR (386 aa)) is NADH dehydrogenase I subunit D.

The protein in the N-terminal section; belongs to the complex I 30 kDa subunit family. This sequence in the C-terminal section; belongs to the complex I 49 kDa subunit family. As to quaternary structure, NDH-1 is composed of 13 different subunits. Subunits NuoB, CD, E, F, and G constitute the peripheral sector of the complex.

The protein resides in the cell inner membrane. The catalysed reaction is a quinone + NADH + 5 H(+)(in) = a quinol + NAD(+) + 4 H(+)(out). Its function is as follows. NDH-1 shuttles electrons from NADH, via FMN and iron-sulfur (Fe-S) centers, to quinones in the respiratory chain. The immediate electron acceptor for the enzyme in this species is believed to be ubiquinone. Couples the redox reaction to proton translocation (for every two electrons transferred, four hydrogen ions are translocated across the cytoplasmic membrane), and thus conserves the redox energy in a proton gradient. The chain is NADH-quinone oxidoreductase subunit C/D from Yersinia pseudotuberculosis serotype O:1b (strain IP 31758).